A 273-amino-acid chain; its full sequence is HMP-PP phosphatase (273 aa).

Residue aspartate 8 is the Nucleophile of the active site. Residues aspartate 8, aspartate 10, and aspartate 212 each contribute to the Mg(2+) site.

It belongs to the HAD-like hydrolase superfamily. Cof family. Requires Mg(2+) as cofactor.

The enzyme catalyses 4-amino-2-methyl-5-(diphosphooxymethyl)pyrimidine + H2O = 4-amino-2-methyl-5-(phosphooxymethyl)pyrimidine + phosphate + H(+). Catalyzes the hydrolysis of 4-amino-2-methyl-5-hydroxymethylpyrimidine pyrophosphate (HMP-PP) to 4-amino-2-methyl-5-hydroxymethylpyrimidine phosphate (HMP-P). The polypeptide is HMP-PP phosphatase (Yersinia enterocolitica serotype O:8 / biotype 1B (strain NCTC 13174 / 8081)).